The following is a 1951-amino-acid chain: Sodium channel protein type 3 subunit alpha (1951 aa).

Residues 1–128 (MAQALLVPPG…KIAIKILVHS (128 aa)) are Cytoplasmic-facing. Positions 28-60 (RAAEEKAKKPKKEQDIDDENKPKPNSDLEAGKN) are disordered. Residues 46–57 (ENKPKPNSDLEA) show a composition bias toward basic and acidic residues. One copy of the I repeat lies at 110–455 (ILTPLNPVRK…QQMLEQLKKQ (346 aa)). The helical transmembrane segment at 129 to 146 (LFSMLIMCTILTNCVFMT) threads the bilayer. Topologically, residues 147–152 (LSNPPD) are extracellular. Residues 153–174 (WTKNVEYTFTGIYTFESLIKIL) traverse the membrane as a helical segment. The Cytoplasmic portion of the chain corresponds to 175-188 (ARGFCLEDFTFLRD). Residues 189–206 (PWNWLDFSVIVMAYVTEF) traverse the membrane as a helical segment. At 207–213 (VDLGNVS) the chain is on the extracellular side. The N-linked (GlcNAc...) asparagine glycan is linked to N211. The chain crosses the membrane as a helical span at residues 214–235 (ALRTFRVLRALKTISVIPGLKT). The Cytoplasmic portion of the chain corresponds to 236 to 249 (IVGALIQSVKKLSD). The helical transmembrane segment at 250 to 269 (VMILTVFCLSVFALIGLQLF) threads the bilayer. Residues 270–369 (MGNLRNKCSQ…NYGYTSFDTF (100 aa)) lie on the Extracellular side of the membrane. N-linked (GlcNAc...) asparagine glycans are attached at residues N290, N296, N302, N307, and N339. Residues 370-386 (SWAFLSLFRLMTQDYWE) constitute an intramembrane region (pore-forming). Residues 387–397 (NLYQLTLRAAG) lie on the Extracellular side of the membrane. Residues 398–424 (KTYMIFFVLVIFLGSFYLVNLILAVVA) traverse the membrane as a helical segment. The Cytoplasmic segment spans residues 425–712 (MAYEEQNQAT…LVNLIVMDPF (288 aa)). Phosphoserine is present on residues S484, S485, and S486. Disordered regions lie at residues 493–529 (SKSA…SESE) and 587–633 (VGSE…TEVR). The span at 500–509 (RNRRKKRRQR) shows a compositional bias: basic residues. Composition is skewed to basic and acidic residues over residues 510–529 (EHLE…SESE) and 596–622 (DEHS…ERRN). The stretch at 693–965 (CCDAWLKVKH…QIAVGRMQKG (273 aa)) is one II repeat. Residues 713-730 (VDLAITICIVLNTLFMAM) form a helical membrane-spanning segment. The Extracellular portion of the chain corresponds to 731–738 (EHYPMTQQ). Residues 739 to 763 (FSSVLTVGNLVFTGIFTAEMVLKII) form a helical membrane-spanning segment. The Cytoplasmic segment spans residues 764 to 773 (AMDPYYYFQE). Residues 774-793 (GWNIFDGIIVSLSLMELGLA) form a helical membrane-spanning segment. The Extracellular segment spans residues 794-797 (NVEG). A helical membrane pass occupies residues 798–816 (LSVLRSFRLLRVFKLAKSW). Over 817–834 (PTLNMLIKIIGNSVGALG) the chain is Cytoplasmic. Residues 835–855 (NLTLVLAIIVFIFAVVGMQLF) traverse the membrane as a helical segment. Over 856–880 (GKSYKECVCKINVDCKLPRWHMNDF) the chain is Extracellular. C864 and C870 form a disulfide bridge. An intramembrane region (pore-forming) is located at residues 881–896 (FHSFLIVFRVLCGEWI). Over 897–907 (ETMWDCMEVAG) the chain is Extracellular. A disulfide bond links C902 and C911. Residues 908–934 (QTMCLIVFMLVMVIGNLVVLNLFLALL) form a helical membrane-spanning segment. Over 935 to 1156 (LSSFSSDNLA…RKTCYSIVEH (222 aa)) the chain is Cytoplasmic. Positions 1068–1112 (TEEFSSESELEESKEKLNATSSSEGSTVDVAPPREGEQAEIEPEE) are disordered. An III repeat occupies 1139 to 1450 (KGKIWWNLRK…KKYYNAMKKL (312 aa)). Residues 1157–1177 (NWFETFIVFMILLSSGALAFE) traverse the membrane as a helical segment. At 1178–1189 (DIYIEQRKTIKT) the chain is on the extracellular side. Residues 1190–1211 (MLEYADKVFTYIFILEMLLKWV) form a helical membrane-spanning segment. The Cytoplasmic portion of the chain corresponds to 1212–1217 (AYGFQT). A helical transmembrane segment spans residues 1218–1243 (YFTNAWCWLDFLIVDVSLVSLVANAL). At 1244–1252 (GYSELGAIK) the chain is on the extracellular side. The helical transmembrane segment at 1253–1271 (SLRTLRALRPLRALSRFEG) threads the bilayer. Residues 1272–1284 (MRVVVNALVGAIP) are Cytoplasmic-facing. A helical transmembrane segment spans residues 1285–1307 (SIMNVLLVCLIFWLIFSIMGVNL). Topologically, residues 1308–1353 (FAGKFYHCVNTTTGNMFEIKEVNNFSDCQALGKQARWKNVKVNFDN) are extracellular. The cysteines at positions 1315 and 1335 are disulfide-linked. N1317 and N1331 each carry an N-linked (GlcNAc...) asparagine glycan. The pore-forming intramembrane region spans 1354–1370 (VGAGYLALLQVATFKGW). Residues 1371–1393 (MDIMYAAVDSRDVKLQPIYEENL) are Extracellular-facing. A helical transmembrane segment spans residues 1394 to 1419 (YMYLYFVIFIIFGSFFTLNLFIGVII). At 1420-1477 (DNFNQQKKKFGGQDIFMTEEQKKYYNAMKKLGSKKPQKPIPRPANKFQGMVFDFVTRQ) the chain is on the cytoplasmic side. S1452 carries the post-translational modification Phosphoserine; by PKC. An IV repeat occupies 1459–1757 (IPRPANKFQG…WEKFDPDATQ (299 aa)). A helical membrane pass occupies residues 1478–1496 (VFDISIMILICLNMVTMMV). At 1497 to 1504 (ETDDQSKY) the chain is on the extracellular side. Residues 1505-1528 (MTLVLSRINLVFIVLFTGEFLLKL) form a helical membrane-spanning segment. At 1529–1538 (ISLRYYYFTI) the chain is on the cytoplasmic side. A helical transmembrane segment spans residues 1539 to 1556 (GWNIFDFVVVILSIVGMF). Over 1557-1568 (LAELIEKYFVSP) the chain is Extracellular. The chain crosses the membrane as a helical span at residues 1569–1591 (TLFRVIRLARIGRILRLIKGAKG). The Cytoplasmic segment spans residues 1592 to 1604 (IRTLLFALMMSLP). A helical membrane pass occupies residues 1605–1628 (ALFNIGLLLFLVMFIYAIFGMSNF). Over 1629-1650 (AYVKKEAGIDDMFNFETFGNSM) the chain is Extracellular. The pore-forming intramembrane region spans 1651 to 1663 (ICLFQITTSAGWD). The Extracellular portion of the chain corresponds to 1664-1695 (GLLAPILNSAPPDCDPDAIHPGSSVKGDCGNP). The chain crosses the membrane as a helical span at residues 1696–1721 (SVGIFFFVSYIIISFLVVVNMYIAVI). The Cytoplasmic segment spans residues 1722–1951 (LENFSVATEE…KGKEVRENQK (230 aa)). Residues 1851 to 1880 (EEVSAAIIQRNYRCYLLKQRLKNISSKYDK) enclose the IQ domain. Residues 1898–1951 (DKLNGNSTPEKTDGSSSTTSPPSYDSVTKPDKEKFEKDKPEKEIKGKEVRENQK) form a disordered region. The span at 1925–1951 (TKPDKEKFEKDKPEKEIKGKEVRENQK) shows a compositional bias: basic and acidic residues.

Belongs to the sodium channel (TC 1.A.1.10) family. Nav1.3/SCN3A subfamily. Heterooligomer of an alpha subunit, SCN3A, and 1 to 3 regulatory beta subunits including SCN1B and SCN2B; disulfide-linked with some beta subunits like SCN2B. Interacts with NEDD4L; could regulate expression of SCN3A at the plasma membrane through ubiquitination-regulated endocytosis. Interacts with the conotoxin GVIIJ. Interacts with the spider beta/delta-theraphotoxin-Pre1a. Interacts with the spider RTX-VII toxin (AC P0DL75). In terms of processing, may be ubiquitinated by NEDD4L; which would promote its endocytosis. Phosphorylation at Ser-1452 by PKC in a highly conserved cytoplasmic loop slows inactivation of the sodium channel and reduces peak sodium currents.

It is found in the cell membrane. The protein localises to the basal cell membrane. It carries out the reaction Na(+)(in) = Na(+)(out). Functionally, pore-forming subunit of Nav1.3, a voltage-gated sodium (Nav) channel that directly mediates the depolarizing phase of action potentials in excitable membranes. Navs, also called VGSCs (voltage-gated sodium channels) or VDSCs (voltage-dependent sodium channels), operate by switching between closed and open conformations depending on the voltage difference across the membrane. In the open conformation they allow Na(+) ions to selectively pass through the pore, along their electrochemical gradient. The influx of Na+ ions provokes membrane depolarization, initiating the propagation of electrical signals throughout cells and tissues. In some secretory cell types, it also participates in cell excitability through membrane depolarization and regulates cells responsiveness to stimuli triggering secretion. For instance, it controls the release of serotonin/5-hydroxytryptamine by enterochromaffin cells and is required for both glucagon- and glucose-induced insulin secretion in pancreatic endocrine cells. The protein is Sodium channel protein type 3 subunit alpha of Rattus norvegicus (Rat).